The primary structure comprises 396 residues: GTPase Obg (396 aa).

Positions 1 to 159 (MKFVDEASIY…RTLKLEMKVL (159 aa)) constitute an Obg domain. Positions 120–146 (GGHHGLGNTRFKSSTNRAPRQTTKGTV) are disordered. Residues 129–144 (RFKSSTNRAPRQTTKG) show a composition bias toward polar residues. The 174-residue stretch at 160-333 (ADVGLLGLPN…LCLDLMTALD (174 aa)) folds into the OBG-type G domain. Residues 166–173 (GLPNAGKS), 191–195 (FTTLV), 213–216 (DIPG), 283–286 (NKTD), and 314–316 (SAI) contribute to the GTP site. Residues serine 173 and threonine 193 each coordinate Mg(2+).

The protein belongs to the TRAFAC class OBG-HflX-like GTPase superfamily. OBG GTPase family. As to quaternary structure, monomer. The cofactor is Mg(2+).

The protein localises to the cytoplasm. An essential GTPase which binds GTP, GDP and possibly (p)ppGpp with moderate affinity, with high nucleotide exchange rates and a fairly low GTP hydrolysis rate. Plays a role in control of the cell cycle, stress response, ribosome biogenesis and in those bacteria that undergo differentiation, in morphogenesis control. This Marinomonas sp. (strain MWYL1) protein is GTPase Obg.